The sequence spans 323 residues: tRNA U34 carboxymethyltransferase (323 aa).

Carboxy-S-adenosyl-L-methionine contacts are provided by residues Lys91, Trp105, Lys110, Gly130, 152-154 (DPT), 181-182 (IE), Met196, Tyr200, and Arg315.

It belongs to the class I-like SAM-binding methyltransferase superfamily. CmoB family. Homotetramer.

The enzyme catalyses carboxy-S-adenosyl-L-methionine + 5-hydroxyuridine(34) in tRNA = 5-carboxymethoxyuridine(34) in tRNA + S-adenosyl-L-homocysteine + H(+). In terms of biological role, catalyzes carboxymethyl transfer from carboxy-S-adenosyl-L-methionine (Cx-SAM) to 5-hydroxyuridine (ho5U) to form 5-carboxymethoxyuridine (cmo5U) at position 34 in tRNAs. This Salmonella gallinarum (strain 287/91 / NCTC 13346) protein is tRNA U34 carboxymethyltransferase.